The following is a 137-amino-acid chain: Small ribosomal subunit protein uS13 (137 aa).

The segment at 114-137 is disordered; it reads VTQKNARTRKGPRKTIMAKKDKGK. Positions 119 to 130 are enriched in basic residues; the sequence is ARTRKGPRKTIM.

This sequence belongs to the universal ribosomal protein uS13 family. As to quaternary structure, part of the 30S ribosomal subunit. Forms a loose heterodimer with protein S19. Forms two bridges to the 50S subunit in the 70S ribosome.

Its function is as follows. Located at the top of the head of the 30S subunit, it contacts several helices of the 16S rRNA. In the 70S ribosome it contacts the 23S rRNA (bridge B1a) and protein L5 of the 50S subunit (bridge B1b), connecting the 2 subunits; these bridges are implicated in subunit movement. Contacts the tRNAs in the A and P-sites. The protein is Small ribosomal subunit protein uS13 of Mesomycoplasma hyopneumoniae (strain 232) (Mycoplasma hyopneumoniae).